Here is a 133-residue protein sequence, read N- to C-terminus: Cytidine deaminase (133 aa).

The CMP/dCMP-type deaminase domain maps to 3–131; sequence VDLDWVHHKL…EILKGGFRSY (129 aa). Position 43–45 (43–45) interacts with substrate; it reads NIE. Position 54 (C54) interacts with Zn(2+). The active-site Proton donor is E56. Residues C89 and C92 each coordinate Zn(2+).

This sequence belongs to the cytidine and deoxycytidylate deaminase family. As to quaternary structure, homodimer. Zn(2+) serves as cofactor.

It carries out the reaction cytidine + H2O + H(+) = uridine + NH4(+). The enzyme catalyses 2'-deoxycytidine + H2O + H(+) = 2'-deoxyuridine + NH4(+). This enzyme scavenges exogenous and endogenous cytidine and 2'-deoxycytidine for UMP synthesis. This is Cytidine deaminase (cdd) from Mycoplasma pneumoniae (strain ATCC 29342 / M129 / Subtype 1) (Mycoplasmoides pneumoniae).